We begin with the raw amino-acid sequence, 563 residues long: Arginine--tRNA ligase (563 aa).

Positions 123–133 (PNIAKDMHVGH) match the 'HIGH' region motif.

Belongs to the class-I aminoacyl-tRNA synthetase family. In terms of assembly, monomer.

Its subcellular location is the cytoplasm. It catalyses the reaction tRNA(Arg) + L-arginine + ATP = L-arginyl-tRNA(Arg) + AMP + diphosphate. In Chlamydia trachomatis serovar D (strain ATCC VR-885 / DSM 19411 / UW-3/Cx), this protein is Arginine--tRNA ligase (argS).